The primary structure comprises 223 residues: Deoxyribose-phosphate aldolase (223 aa).

Residue Asp92 is the Proton donor/acceptor of the active site. Lys154 (schiff-base intermediate with acetaldehyde) is an active-site residue. Lys182 serves as the catalytic Proton donor/acceptor.

This sequence belongs to the DeoC/FbaB aldolase family. DeoC type 1 subfamily.

It is found in the cytoplasm. It catalyses the reaction 2-deoxy-D-ribose 5-phosphate = D-glyceraldehyde 3-phosphate + acetaldehyde. It participates in carbohydrate degradation; 2-deoxy-D-ribose 1-phosphate degradation; D-glyceraldehyde 3-phosphate and acetaldehyde from 2-deoxy-alpha-D-ribose 1-phosphate: step 2/2. Catalyzes a reversible aldol reaction between acetaldehyde and D-glyceraldehyde 3-phosphate to generate 2-deoxy-D-ribose 5-phosphate. The chain is Deoxyribose-phosphate aldolase from Haemophilus influenzae (strain 86-028NP).